A 440-amino-acid chain; its full sequence is Thymidine phosphorylase (440 aa).

This sequence belongs to the thymidine/pyrimidine-nucleoside phosphorylase family. Homodimer.

It catalyses the reaction thymidine + phosphate = 2-deoxy-alpha-D-ribose 1-phosphate + thymine. It functions in the pathway pyrimidine metabolism; dTMP biosynthesis via salvage pathway; dTMP from thymine: step 1/2. The enzymes which catalyze the reversible phosphorolysis of pyrimidine nucleosides are involved in the degradation of these compounds and in their utilization as carbon and energy sources, or in the rescue of pyrimidine bases for nucleotide synthesis. In Salmonella dublin (strain CT_02021853), this protein is Thymidine phosphorylase.